The following is a 269-amino-acid chain: Putative pyruvate, phosphate dikinase regulatory protein (269 aa).

An ADP-binding site is contributed by G151–T158.

The protein belongs to the pyruvate, phosphate/water dikinase regulatory protein family. PDRP subfamily.

The catalysed reaction is N(tele)-phospho-L-histidyl/L-threonyl-[pyruvate, phosphate dikinase] + ADP = N(tele)-phospho-L-histidyl/O-phospho-L-threonyl-[pyruvate, phosphate dikinase] + AMP + H(+). The enzyme catalyses N(tele)-phospho-L-histidyl/O-phospho-L-threonyl-[pyruvate, phosphate dikinase] + phosphate + H(+) = N(tele)-phospho-L-histidyl/L-threonyl-[pyruvate, phosphate dikinase] + diphosphate. Functionally, bifunctional serine/threonine kinase and phosphorylase involved in the regulation of the pyruvate, phosphate dikinase (PPDK) by catalyzing its phosphorylation/dephosphorylation. The polypeptide is Putative pyruvate, phosphate dikinase regulatory protein (Geobacter sulfurreducens (strain ATCC 51573 / DSM 12127 / PCA)).